The chain runs to 92 residues: Small ribosomal subunit protein uS19 (92 aa).

This sequence belongs to the universal ribosomal protein uS19 family.

Protein S19 forms a complex with S13 that binds strongly to the 16S ribosomal RNA. In Bartonella henselae (strain ATCC 49882 / DSM 28221 / CCUG 30454 / Houston 1) (Rochalimaea henselae), this protein is Small ribosomal subunit protein uS19.